The following is a 180-amino-acid chain: Peroxisome assembly protein 22 (180 aa).

The helical transmembrane segment at 15–32 (LGIVGTAIAVLVTSYYIY) threads the bilayer.

It belongs to the peroxin-22 family.

It localises to the peroxisome membrane. In terms of biological role, involved in peroxisome biogenesis. The protein is Peroxisome assembly protein 22 (PEX22) of Saccharomyces cerevisiae (strain ATCC 204508 / S288c) (Baker's yeast).